The following is a 271-amino-acid chain: Ribosomal RNA small subunit methyltransferase A (271 aa).

Positions 11, 13, 38, 58, 86, and 101 each coordinate S-adenosyl-L-methionine.

This sequence belongs to the class I-like SAM-binding methyltransferase superfamily. rRNA adenine N(6)-methyltransferase family. RsmA subfamily.

The protein resides in the cytoplasm. It catalyses the reaction adenosine(1518)/adenosine(1519) in 16S rRNA + 4 S-adenosyl-L-methionine = N(6)-dimethyladenosine(1518)/N(6)-dimethyladenosine(1519) in 16S rRNA + 4 S-adenosyl-L-homocysteine + 4 H(+). Functionally, specifically dimethylates two adjacent adenosines (A1518 and A1519) in the loop of a conserved hairpin near the 3'-end of 16S rRNA in the 30S particle. May play a critical role in biogenesis of 30S subunits. The sequence is that of Ribosomal RNA small subunit methyltransferase A from Helicobacter pylori (strain P12).